The primary structure comprises 361 residues: 1-deoxy-D-xylulose 5-phosphate reductoisomerase (361 aa).

NADPH is bound by residues Thr-12, Gly-13, Ser-14, Ile-15, Gly-38, and Asn-102. Lys-103 is a binding site for 1-deoxy-D-xylulose 5-phosphate. Residue Glu-104 coordinates NADPH. Residue Asp-126 participates in Mn(2+) binding. 1-deoxy-D-xylulose 5-phosphate contacts are provided by Ser-127, Glu-128, Ser-152, and His-175. Glu-128 is a binding site for Mn(2+). Gly-181 contributes to the NADPH binding site. Ser-188, Asn-193, Lys-194, and Glu-197 together coordinate 1-deoxy-D-xylulose 5-phosphate. Glu-197 contacts Mn(2+).

The protein belongs to the DXR family. Requires Mg(2+) as cofactor. Mn(2+) serves as cofactor.

It catalyses the reaction 2-C-methyl-D-erythritol 4-phosphate + NADP(+) = 1-deoxy-D-xylulose 5-phosphate + NADPH + H(+). Its pathway is isoprenoid biosynthesis; isopentenyl diphosphate biosynthesis via DXP pathway; isopentenyl diphosphate from 1-deoxy-D-xylulose 5-phosphate: step 1/6. Its function is as follows. Catalyzes the NADPH-dependent rearrangement and reduction of 1-deoxy-D-xylulose-5-phosphate (DXP) to 2-C-methyl-D-erythritol 4-phosphate (MEP). This Leifsonia xyli subsp. xyli (strain CTCB07) protein is 1-deoxy-D-xylulose 5-phosphate reductoisomerase.